The sequence spans 506 residues: Arabinose import ATP-binding protein AraG (506 aa).

2 consecutive ABC transporter domains span residues 10-245 (LEFC…MVGR) and 253-501 (YRSR…MLGN). Residue 42–49 (GENGAGKS) participates in ATP binding.

It belongs to the ABC transporter superfamily. Arabinose importer (TC 3.A.1.2.2) family. The complex is composed of two ATP-binding proteins (AraG), two transmembrane proteins (AraH) and a solute-binding protein (AraF).

It localises to the cell inner membrane. It catalyses the reaction L-arabinose(out) + ATP + H2O = L-arabinose(in) + ADP + phosphate + H(+). Part of the ABC transporter complex AraFGH involved in arabinose import. Responsible for energy coupling to the transport system. The sequence is that of Arabinose import ATP-binding protein AraG from Vibrio parahaemolyticus serotype O3:K6 (strain RIMD 2210633).